A 401-amino-acid chain; its full sequence is Coenzyme A biosynthesis bifunctional protein CoaBC (401 aa).

The phosphopantothenoylcysteine decarboxylase stretch occupies residues 1–190; sequence MQTLAGKKIL…FQPKPLQDKS (190 aa). Cys159 functions as the Proton donor in the catalytic mechanism. The interval 191–401 is phosphopantothenate--cysteine ligase; that stretch reads ILITAGPTRE…LKQIQTLMGH (211 aa). Residues Asp279, Lys289, 307-310, Phe326, Lys340, and Lys344 each bind CTP; that span reads PDIV.

This sequence in the N-terminal section; belongs to the HFCD (homo-oligomeric flavin containing Cys decarboxylase) superfamily. It in the C-terminal section; belongs to the PPC synthetase family. The cofactor is Mg(2+). It depends on FMN as a cofactor.

The enzyme catalyses N-[(R)-4-phosphopantothenoyl]-L-cysteine + H(+) = (R)-4'-phosphopantetheine + CO2. It carries out the reaction (R)-4'-phosphopantothenate + L-cysteine + CTP = N-[(R)-4-phosphopantothenoyl]-L-cysteine + CMP + diphosphate + H(+). It participates in cofactor biosynthesis; coenzyme A biosynthesis; CoA from (R)-pantothenate: step 2/5. Its pathway is cofactor biosynthesis; coenzyme A biosynthesis; CoA from (R)-pantothenate: step 3/5. In terms of biological role, catalyzes two sequential steps in the biosynthesis of coenzyme A. In the first step cysteine is conjugated to 4'-phosphopantothenate to form 4-phosphopantothenoylcysteine. In the second step the latter compound is decarboxylated to form 4'-phosphopantotheine. This Vibrio vulnificus (strain YJ016) protein is Coenzyme A biosynthesis bifunctional protein CoaBC.